Reading from the N-terminus, the 435-residue chain is Phosphomethylpyrimidine synthase (435 aa).

Substrate contacts are provided by residues N67, M96, Y125, H163, 185-187, 226-229, and E265; these read SRG and DGLR. Zn(2+) is bound at residue H269. Residue Y292 participates in substrate binding. Residue H333 coordinates Zn(2+). [4Fe-4S] cluster contacts are provided by C408, C411, and C415.

This sequence belongs to the ThiC family. The cofactor is [4Fe-4S] cluster.

The catalysed reaction is 5-amino-1-(5-phospho-beta-D-ribosyl)imidazole + S-adenosyl-L-methionine = 4-amino-2-methyl-5-(phosphooxymethyl)pyrimidine + CO + 5'-deoxyadenosine + formate + L-methionine + 3 H(+). The protein operates within cofactor biosynthesis; thiamine diphosphate biosynthesis. Catalyzes the synthesis of the hydroxymethylpyrimidine phosphate (HMP-P) moiety of thiamine from aminoimidazole ribotide (AIR) in a radical S-adenosyl-L-methionine (SAM)-dependent reaction. This Thermus thermophilus (strain ATCC BAA-163 / DSM 7039 / HB27) protein is Phosphomethylpyrimidine synthase.